Here is a 366-residue protein sequence, read N- to C-terminus: Leucine dehydrogenase (366 aa).

Lysine 82 is a catalytic residue. 182–188 (GVGNVAY) contacts NAD(+).

This sequence belongs to the Glu/Leu/Phe/Val dehydrogenases family.

The catalysed reaction is L-leucine + NAD(+) + H2O = 4-methyl-2-oxopentanoate + NH4(+) + NADH + H(+). The protein operates within amino-acid degradation; L-leucine degradation; 4-methyl-2-oxopentanoate from L-leucine (dehydrogenase route): step 1/1. In terms of biological role, catalyzes the reversible deamination of L-leucine to 4-methyl-2-oxopentanoate. The sequence is that of Leucine dehydrogenase (ldh) from Bacillus cereus.